The chain runs to 185 residues: Protein DP71L (185 aa).

Positions 1-15 (MSRRNKKRSRRRRKK) are enriched in basic residues. The tract at residues 1 to 38 (MSRRNKKRSRRRRKKPLNDIQPGPSKSSAQDEPIKSVS) is disordered. Important for host CHOP inhibition stretches follow at residues 126–128 (VHF) and 170–174 (LSTVF).

This sequence belongs to the asfivirus DP71L family. Interacts (via C-terminus) with host PPP1CB.

Its function is as follows. Interacts with the host phosphatase PP1 catalytic subunit (PPP1CB) and recruits it to dephosphorylate EIF2S1/eIF2alpha and therefore restores the host translation that has been shut-down by the host. Also inhibits the EIF2S1/eIF2alpha-ATF4-DDIT3/CHOP pathway. The protein is Protein DP71L of African swine fever virus (isolate Pig/Kenya/KEN-50/1950) (ASFV).